Consider the following 423-residue polypeptide: NADP-specific glutamate dehydrogenase (423 aa).

Lysine 112 is a catalytic residue.

The protein belongs to the Glu/Leu/Phe/Val dehydrogenases family. In terms of assembly, homohexamer.

The enzyme catalyses L-glutamate + NADP(+) + H2O = 2-oxoglutarate + NH4(+) + NADPH + H(+). The protein is NADP-specific glutamate dehydrogenase (gdhA) of Saccharolobus shibatae (strain ATCC 51178 / DSM 5389 / JCM 8931 / NBRC 15437 / B12) (Sulfolobus shibatae).